A 527-amino-acid polypeptide reads, in one-letter code: uncharacterized protein (527 aa).

Residues 1 to 93 (MSYMIAVPDM…AGAYASAEAT (93 aa)) enclose the PE domain. Gly residues-rich tracts occupy residues 264–286 (IHGH…GVQG), 292–384 (GAAG…AGNG), and 472–515 (NGGD…GGSR). Disordered stretches follow at residues 264-384 (IHGH…AGNG) and 472-527 (NGGD…TPGQ).

It belongs to the mycobacterial PE family. PGRS subfamily.

This is an uncharacterized protein from Mycobacterium tuberculosis (strain CDC 1551 / Oshkosh).